The sequence spans 243 residues: Phomoidride biosynthesis cluster protein B (243 aa).

It belongs to the tstB family.

Its function is as follows. Phosphatidylethanolamine-binding protein; part of the gene cluster that mediates the biosynthesis of the antihypercholesterolemic agents phomoidrides which are dimeric anhydrides. Within the pathway, tstB is not essential for dimerization and its function has still to be determined. The pathway begins with the highly reducing polyketide synthase tstA that catalyzes the formation of a C12-fatty acyl-ACP, starting from one acetate and 5 malonate units. The hydrolase tstM is involved in the release of the C12-fatty acyl chain from phiA. The alkylcitrate synthase (ACS) tstJ and the alkylcitrate dehydratase (ACDH) tstI then give rise to decarboxylated monomeric anhydrides by coupling the C12-fatty acyl chain with oxalacetic acid. The cyclase tstC is responsible for the dimerization of the monomeric anhydrides which leads to the production of prephomoidride that contains the characteristic bicyclo[4.3.1]deca-1,6-diene system of phomoidrides. Iterative oxidation catalyzed by the alpha-ketoglutarate-dependent dioxygenase tstK produced then phomoidride A. Finally, the methyltransferase tstE converts phomoidride A to phomoidride B via an acetalization reaction. The phosphatidylethanolamine-binding protein tstB and tstN are not essential for dimerization and their functions have still to be determined. This chain is Phomoidride biosynthesis cluster protein B, found in Talaromyces stipitatus (strain ATCC 10500 / CBS 375.48 / QM 6759 / NRRL 1006) (Penicillium stipitatum).